The following is a 782-amino-acid chain: MNILKKFMESGNKPELITIPSGQFNLLRSKNSPKAALECIYNNATLSVRKIGKFDYELAVYRVEDDSEGGTGDEAENFEDDTISVLSTQSKKKEEEWSVEISDKIMFHKTWDKQGNVALVWENLRGDEQDEKVQFVVAADVSFSDVEQFIQTVYRCQFEVRNKKSSLTASADDLKEIEHRSTRLFVQDDDDELDSSSDDFQDAKDTSFEHEKESEILERTPSPLKKVPEGEYCCLVMSSLYMYDPIQEKFILQEPVVKVAIIDTGKYEFWLAIEGKDNRLGTQVAPNINPTFELATDAFLFNYTLQNITLSYMLKFKDLDKCIQFRFAWVKCLWMTLNKETWTDVPEKEKDYILDSSSVPLEKQFDDILHIDDRSNEERDKESSESENDSEDEDDENDHSKRIISSEAFEEPRRATSKGNSSLTVAFRNNRSYVTRDNRIGVFKTDDEDDSLEFVAAIKNISNLGGKSIDPHKPMLYMEDRNLILTDGENENKLYKMDIERGKVIEEWSTGDKNVVQYGPTKKFDQMTPEQTIVGVSQKGVFKIDPRINGKNKIAVDESKDYVGKYNFSSIGTTESGYIAIGSEKGDIKLYDRLGIRAKTAIPSLGQAIKFITTSADGKWLLATCESTLLLMDLKIKDGKNAGNIGFLKSFPASENVKTYVLKIRPEHSASILTYTKKPIRFTKAYFNTGIGQQEQTIVTSTGPYAISWSLKGILNQDGSNNYPYRIRRYNADVVADNFEFGSDKKVIVALKDDVSLSKVKSFKQPSKGVLMPSASLQDFYG.

A phosphoserine mark is found at Ser170, Ser195, and Ser196. Residues 188 to 200 show a composition bias toward acidic residues; the sequence is DDDDELDSSSDDF. Residues 188–215 form a disordered region; sequence DDDDELDSSSDDFQDAKDTSFEHEKESE. Basic and acidic residues predominate over residues 201 to 215; it reads QDAKDTSFEHEKESE. Ser222 is subject to Phosphoserine. Residues 372 to 384 are compositionally biased toward basic and acidic residues; the sequence is DDRSNEERDKESS. The interval 372–422 is disordered; that stretch reads DDRSNEERDKESSESENDSEDEDDENDHSKRIISSEAFEEPRRATSKGNSS. Residues 385-397 show a composition bias toward acidic residues; sequence ESENDSEDEDDEN. Thr486 is subject to Phosphothreonine.

The protein belongs to the VID27 family.

Its subcellular location is the cytoplasm. Its function is as follows. Has a role in the negative regulation of gluconeogenesis. Required for vacuolar catabolite degradation of fructose-1,6-bisphosphatase (FBPase). In Saccharomyces cerevisiae (strain ATCC 204508 / S288c) (Baker's yeast), this protein is Vacuolar import and degradation protein 27 (VID27).